We begin with the raw amino-acid sequence, 131 residues long: Profilin-2 (131 aa).

It belongs to the profilin family. As to quaternary structure, occurs in many kinds of cells as a complex with monomeric actin in a 1:1 ratio.

The protein localises to the cytoplasm. Its subcellular location is the cytoskeleton. Binds to actin and affects the structure of the cytoskeleton. At high concentrations, profilin prevents the polymerization of actin, whereas it enhances it at low concentrations. By binding to PIP2, it inhibits the formation of IP3 and DG. This is Profilin-2 from Ambrosia artemisiifolia (Common ragweed).